The primary structure comprises 155 residues: Biotin carboxyl carrier protein of acetyl-CoA carboxylase (155 aa).

The Biotinyl-binding domain maps to 72-155 (AASDELSGHL…EFDEPLIVIE (84 aa)). Lys-121 is subject to N6-biotinyllysine.

In terms of assembly, homodimer.

Its pathway is lipid metabolism; fatty acid biosynthesis. This protein is a component of the acetyl coenzyme A carboxylase complex; first, biotin carboxylase catalyzes the carboxylation of the carrier protein and then the transcarboxylase transfers the carboxyl group to form malonyl-CoA. In Haemophilus influenzae (strain ATCC 51907 / DSM 11121 / KW20 / Rd), this protein is Biotin carboxyl carrier protein of acetyl-CoA carboxylase (accB).